Consider the following 886-residue polypeptide: Probable mixed-linked glucan synthase 8 (886 aa).

The next 2 helical transmembrane spans lie at 87–107 and 118–138; these read ILLH…VLFF and GMFF…SWLL. Aspartate 213 is a catalytic residue. Residues aspartate 413 and aspartate 415 each contribute to the substrate site. Aspartate 577 is a catalytic residue. The next 6 helical transmembrane spans lie at 659–679, 683–703, 723–743, 775–795, 812–832, and 840–860; these read VFLL…IFYI, FPTY…IGMV, IIGA…KCFG, LLFP…AAIG, LGLV…LGIM, and YILF…DIAI.

It belongs to the glycosyltransferase 2 family. Plant cellulose synthase-like F subfamily.

It is found in the golgi apparatus membrane. Functionally, may catalyze both beta-1,3 and beta-1,4 glycosidic linkage on beta-D-glucan. Essential for (1,3;1,4)-beta-D-glucans synthesis in grasses and cereals (Poaceae). The mixed-linked glucans (which are not present in walls of dicotyledons or most other monocotyledonous plants) are particularly important constituents of the walls of the starchy endosperm and aleurone cells of cereal grains such as oats, wheat, rice and barley. They can account for up to 70% by weight of the wall. The polypeptide is Probable mixed-linked glucan synthase 8 (CSFL8) (Oryza sativa subsp. japonica (Rice)).